The primary structure comprises 2698 residues: Chromodomain-helicase-DNA-binding protein 6 (2698 aa).

Composition is skewed to basic and acidic residues over residues 1 to 12 (MKMKIQKKEKQL), 100 to 115 (EPGEQEGTKASKDREP), and 122 to 171 (EPKE…KRSC). The segment at 1–243 (MKMKIQKKEK…KRRSGRQVKR (243 aa)) is disordered. The required for DNA-dependent ATPase activity stretch occupies residues 1-746 (MKMKIQKKEK…MMELRKCCNH (746 aa)). Positions 213-224 (QSLPNPSLQSPE) are enriched in low complexity. 2 consecutive Chromo domains span residues 291–342 (NIIE…KDPR) and 374–438 (IEID…KPVE). Residues 472-646 (LFNWYNRKNC…FSLLNFLEPS (175 aa)) enclose the Helicase ATP-binding domain. 485-492 (DEMGLGKT) is a binding site for ATP. Residues 597–600 (DEAH) carry the DEAH box motif. A Helicase C-terminal domain is found at 786–955 (LIDKLLPKLI…LSKMEVEDLL (170 aa)). The disordered stretch occupies residues 1318–1370 (SLSAEQGVTDGTSDIPERGNIDKEDSAEDKVDGLQKQTASPSDGSDGIFGEKK). A compositionally biased stretch (polar residues) spans 1320–1329 (SAEQGVTDGT). The span at 1332–1350 (IPERGNIDKEDSAEDKVDG) shows a compositional bias: basic and acidic residues. Positions 1435–1489 (RWTRREQADFYRTVSSFGVVYDQEKEAFDWTQFRAISRLDKKSDENLEHYFHSFV) constitute a Myb-like domain. Residues 1707–1730 (EPRSFQEAPSTNMQSRKKTVTVSA) are compositionally biased toward polar residues. Residues 1707-1731 (EPRSFQEAPSTNMQSRKKTVTVSAS) are disordered. Position 1852 is a phosphoserine (Ser-1852). Disordered regions lie at residues 1935–2046 (GLGS…ASGI), 2111–2137 (LPTPVLSSSAGSRSSLSEPEATEHSFS), 2308–2337 (TTLNTTHPEGPGAASSASEPTAAASSQAEK), 2359–2387 (PGFGASFSDKPKQRRPRCKEPGKLDIGSL), 2538–2587 (ASLA…PTIT), and 2626–2698 (QGRH…DDTN). Composition is skewed to basic and acidic residues over residues 1943-1955 (GEKPKAYEPDPYR), 1975-1991 (FKLKHELLKEPWKESSE), and 2004-2024 (SEPKSEEMDFENKDDYEKDGA). Composition is skewed to low complexity over residues 2117-2127 (SSSAGSRSSLS) and 2315-2336 (PEGPGAASSASEPTAAASSQAE). A compositionally biased stretch (low complexity) spans 2538–2550 (ASLASTKSGASAT). A compositionally biased stretch (basic and acidic residues) spans 2552-2573 (KTTEDELSGRDVKADSLVEDKP). Composition is skewed to polar residues over residues 2578–2587 (FSDQSEPTIT) and 2664–2675 (SDQNCTESSVTV). A compositionally biased stretch (basic and acidic residues) spans 2677 to 2698 (PEREHVAQAREEGLKDSNDDTN).

Belongs to the SNF2/RAD54 helicase family. Interacts with NFE2L2; involved in activation of the transcription. May interact with PPARA. In terms of tissue distribution, widely expressed.

It is found in the nucleus. The protein localises to the nucleoplasm. The enzyme catalyses ATP + H2O = ADP + phosphate + H(+). Its function is as follows. ATP-dependent chromatin-remodeling factor. Regulates transcription by disrupting nucleosomes in a largely non-sliding manner which strongly increases the accessibility of chromatin. Activates transcription of specific genes in response to oxidative stress through interaction with NFE2L2. This Rattus norvegicus (Rat) protein is Chromodomain-helicase-DNA-binding protein 6 (Chd6).